Reading from the N-terminus, the 279-residue chain is Pantothenate synthetase (279 aa).

26–33 (MGNLHDGH) serves as a coordination point for ATP. Catalysis depends on His-33, which acts as the Proton donor. Residue Gln-57 coordinates (R)-pantoate. Gln-57 contacts beta-alanine. Position 144-147 (144-147 (GKKD)) interacts with ATP. Gln-150 contacts (R)-pantoate. Residue 181 to 184 (LSSR) participates in ATP binding.

The protein belongs to the pantothenate synthetase family. As to quaternary structure, homodimer.

It is found in the cytoplasm. The catalysed reaction is (R)-pantoate + beta-alanine + ATP = (R)-pantothenate + AMP + diphosphate + H(+). Its pathway is cofactor biosynthesis; (R)-pantothenate biosynthesis; (R)-pantothenate from (R)-pantoate and beta-alanine: step 1/1. Functionally, catalyzes the condensation of pantoate with beta-alanine in an ATP-dependent reaction via a pantoyl-adenylate intermediate. This Herminiimonas arsenicoxydans protein is Pantothenate synthetase.